A 159-amino-acid chain; its full sequence is Small ribosomal subunit protein uS9 (159 aa).

This sequence belongs to the universal ribosomal protein uS9 family.

The protein is Small ribosomal subunit protein uS9 of Rickettsia peacockii (strain Rustic).